A 273-amino-acid chain; its full sequence is Undecaprenyl-diphosphatase (273 aa).

7 helical membrane-spanning segments follow: residues 4 to 24 (LILIKAFLLGIVEGLTEFLPI), 43 to 63 (KAQVFTVAIQLGAILSVCWEY), 82 to 102 (FVLNLCVAFLPAAILGLLFIK), 108 to 128 (LFHPLPVAIALVTGGVLILWA), 183 to 203 (AAEFSFFLAIPIMFAATFYDV), 217 to 237 (MFVVGSIAAFISALIAIRGFI), and 253 to 273 (IGFGLIVLLTAHFGLINWSAG).

The protein belongs to the UppP family.

It localises to the cell inner membrane. It catalyses the reaction di-trans,octa-cis-undecaprenyl diphosphate + H2O = di-trans,octa-cis-undecaprenyl phosphate + phosphate + H(+). Catalyzes the dephosphorylation of undecaprenyl diphosphate (UPP). Confers resistance to bacitracin. The chain is Undecaprenyl-diphosphatase from Nitrosomonas eutropha (strain DSM 101675 / C91 / Nm57).